The primary structure comprises 334 residues: Trans-1,2-dihydrobenzene-1,2-diol dehydrogenase (334 aa).

Belongs to the Gfo/Idh/MocA family. In terms of assembly, homodimer.

It catalyses the reaction (1R,2R)-1,2-dihydrobenzene-1,2-diol + NADP(+) = catechol + NADPH + H(+). It carries out the reaction D-xylose + NADP(+) = D-xylono-1,5-lactone + NADPH + H(+). The sequence is that of Trans-1,2-dihydrobenzene-1,2-diol dehydrogenase (dhdh) from Danio rerio (Zebrafish).